Consider the following 234-residue polypeptide: Phycobilisome rod-core linker polypeptide cpcG (234 aa).

A PBS-linker domain is found at Ser-11–Arg-191.

Belongs to the phycobilisome linker protein family. In terms of assembly, the phycobilisome is a hemidiscoidal structure that is composed of two distinct substructures: a core complex and a number of rods radiating from the core.

Its subcellular location is the plastid. The protein resides in the chloroplast thylakoid membrane. Rod-core linker protein required for attachment of phycocyanin to allophycocyanin in cores of phycobilisomes. Its function is as follows. Linker polypeptides determine the state of aggregation and the location of the disk-shaped phycobiliprotein units within the phycobilisome and modulate their spectroscopic properties in order to mediate a directed and optimal energy transfer. This is Phycobilisome rod-core linker polypeptide cpcG (cpcG) from Cyanidium caldarium (Red alga).